Reading from the N-terminus, the 273-residue chain is Phosphate import ATP-binding protein PstB (273 aa).

One can recognise an ABC transporter domain in the interval 17-259 (LSAENLSIFY…DKTNNIFQNP (243 aa)). 49 to 56 (GPSGCGKS) is an ATP binding site.

Belongs to the ABC transporter superfamily. Phosphate importer (TC 3.A.1.7) family. In terms of assembly, the complex is composed of two ATP-binding proteins (PstB), two transmembrane proteins (PstC and PstA) and a solute-binding protein (PstS).

It localises to the cell inner membrane. The enzyme catalyses phosphate(out) + ATP + H2O = ADP + 2 phosphate(in) + H(+). Its function is as follows. Part of the ABC transporter complex PstSACB involved in phosphate import. Responsible for energy coupling to the transport system. In Trichodesmium erythraeum (strain IMS101), this protein is Phosphate import ATP-binding protein PstB.